The primary structure comprises 1053 residues: MLDVNNFEYMKIGLASPDKIRSWSFGEVKKPETINYRTLKPERDGLFCERIFGPTKDWECSCGKYKRVRYKGVVCDRCGVEVTKSKVRRERMGHIELAAPVSHIWYFKGIPSRMGLVLDMSPRALEEVIYFASYVVTEAGDTALDKKQLLSEREYRAYREKYGQSFQAGMGAEAIKRLLDAVDLEGEVTELKEELKSAQGQRRTRAIRRLEVLEAFRHSGNKPSWMVLDVLPVIPPEIRPMVQLEGGRFATSDLNDLYRRVINRNNRLKRLLDLGAPSIIVQNEKRMLQEAVDGLIDNGRRGRPVTGPGNRPLKSLSHMLKGKQGRFRQNLLGKRVDYSGRSVIVCGPSLKMYQCGLPREMAIELFKPFVMRELTQRGLAHNIKSAKRKIERHSPEIWDVLEDVIREHPVLLNRAPTLHRLGIQAFEPILVEGRAIRLHPLVCTAYNADFDGDQMAVHVPLSPEAQAEARILMLAANHILNPKDGKPVVTPSQDMVLGNYYLTLERENIVGEGLVFTDINEAMIAYQNGYVHLHSRVAVAAASLGNETFTAEQNNQLLITTVGKMIFNSILPPSFPYLNEPTKTNLEVATPSQYFVPTTTDVKAHIEKQAFLLPFKKKNLEEIIAQIFKLFHITETSKMLDRMKDQGFKYSTLAGITVGISDIIVVKDKPEILAASHDEVDNVTKMFKRGLMTDEERYERVIAIWNAAKDQLQNKLIAGLDRLNPIFMMQDSGARGNISNFTQLAGMRGLMADPSGRIVELPITSNFREGLNVLEYFISSHGARKGLTDTALKTADSGYLTRRLVDVAQDVIVRETNDGSDHGLLVSDIVEGPEVIETLTERLEGRYSAKTVRHPETNEVMIRPDELFTQEIAEAIPAAGIKEVWIRSVFTCNTKHGVSKISYGKDLSTGSEVEVGEAVGIVAAQSIGEPGTQLTMRTFHTGGVAGSDITQGLPRIQEIFEARNPKGHAVITELTGEVKAIEEKANRQREITVTGTQETRTYTVPMVARLKVKVGDAVRRGDPLMDGSIDPKELLHVTDVITVENYLLGEVQK.

Zn(2+)-binding residues include Cys60, Cys62, Cys75, and Cys78. The Mg(2+) site is built by Asp449, Asp451, and Asp453.

It belongs to the RNA polymerase beta' chain family. In terms of assembly, the RNAP catalytic core consists of 2 alpha, 1 beta, 1 beta' and 1 omega subunit. When a sigma factor is associated with the core the holoenzyme is formed, which can initiate transcription. The cofactor is Mg(2+). Zn(2+) is required as a cofactor.

The enzyme catalyses RNA(n) + a ribonucleoside 5'-triphosphate = RNA(n+1) + diphosphate. DNA-dependent RNA polymerase catalyzes the transcription of DNA into RNA using the four ribonucleoside triphosphates as substrates. The protein is DNA-directed RNA polymerase subunit beta' of Brochothrix thermosphacta (Microbacterium thermosphactum).